A 231-amino-acid chain; its full sequence is Putative cobalt transport protein CbiM 2 (231 aa).

6 helical membrane-spanning segments follow: residues 8 to 28 (LPIG…IYGI), 41 to 61 (VLPL…LKIP), 75 to 95 (LSAA…VLLF), 108 to 128 (LGAN…LVFV), 136 to 156 (VGIG…TYTV), and 176 to 196 (IAFA…EGII).

This sequence belongs to the CbiM family. As to quaternary structure, forms an energy-coupling factor (ECF) transporter complex composed of an ATP-binding protein (A component, CbiO), a transmembrane protein (T component, CbiQ) and 2 possible substrate-capture proteins (S components, CbiM and CbiN) of unknown stoichimetry.

The protein localises to the cell membrane. Its pathway is cofactor biosynthesis; adenosylcobalamin biosynthesis. In terms of biological role, part of the energy-coupling factor (ECF) transporter complex CbiMNOQ involved in cobalt import. In Methanocorpusculum labreanum (strain ATCC 43576 / DSM 4855 / Z), this protein is Putative cobalt transport protein CbiM 2.